Here is a 345-residue protein sequence, read N- to C-terminus: Protein-glutamate methylesterase/protein-glutamine glutaminase 1 (345 aa).

The Response regulatory domain occupies 8–123 (SVLVIDDSAH…FEAMEALRVE (116 aa)). Position 59 is a 4-aspartylphosphate (Asp-59). Residues 151–344 (AGEPPLVVAV…PALAALARRR (194 aa)) form the CheB-type methylesterase domain. Active-site residues include Ser-163, His-190, and Asp-286.

It belongs to the CheB family. Post-translationally, phosphorylated by CheA. Phosphorylation of the N-terminal regulatory domain activates the methylesterase activity.

It localises to the cytoplasm. The catalysed reaction is [protein]-L-glutamate 5-O-methyl ester + H2O = L-glutamyl-[protein] + methanol + H(+). It catalyses the reaction L-glutaminyl-[protein] + H2O = L-glutamyl-[protein] + NH4(+). In terms of biological role, involved in chemotaxis. Part of a chemotaxis signal transduction system that modulates chemotaxis in response to various stimuli. Catalyzes the demethylation of specific methylglutamate residues introduced into the chemoreceptors (methyl-accepting chemotaxis proteins or MCP) by CheR. Also mediates the irreversible deamidation of specific glutamine residues to glutamic acid. The chain is Protein-glutamate methylesterase/protein-glutamine glutaminase 1 from Myxococcus xanthus (strain DK1622).